The primary structure comprises 474 residues: Transcription termination factor Rho (474 aa).

The disordered stretch occupies residues 1–60; sequence MTEELDNTPSPAGDIPQETLPKPLPAPEETAGEQPAAAPEENRGNAVREEEEAAPVLEQI. Residues 107-182 form the Rho RNA-BD domain; it reads EVVVSGVMEQ…ASVISVEDIP (76 aa). ATP is bound by residues 226–231, 238–243, and R269; these read GKGQRG and RGGKTV.

Belongs to the Rho family. As to quaternary structure, homohexamer. The homohexamer assembles into an open ring structure.

Facilitates transcription termination by a mechanism that involves Rho binding to the nascent RNA, activation of Rho's RNA-dependent ATPase activity, and release of the mRNA from the DNA template. The polypeptide is Transcription termination factor Rho (Akkermansia muciniphila (strain ATCC BAA-835 / DSM 22959 / JCM 33894 / BCRC 81048 / CCUG 64013 / CIP 107961 / Muc)).